The chain runs to 269 residues: 5'-nucleotidase SurE (269 aa).

A divalent metal cation-binding residues include Asp-11, Asp-12, Ser-43, and Asn-101.

The protein belongs to the SurE nucleotidase family. A divalent metal cation is required as a cofactor.

The protein localises to the cytoplasm. The catalysed reaction is a ribonucleoside 5'-phosphate + H2O = a ribonucleoside + phosphate. Its function is as follows. Nucleotidase that shows phosphatase activity on nucleoside 5'-monophosphates. In Synechococcus sp. (strain WH7803), this protein is 5'-nucleotidase SurE.